A 456-amino-acid polypeptide reads, in one-letter code: MTIPVPKPAHPAAPDTNTDGLPNPKVVVPVEADEEEDDDDEEGKEDADGAVPAASHFSTHALDGTKKKKKKKKKPKKKKTGEAGAGGQSEPPRVPVSKLFPNGNYPSGEESAYLGENSYRTTSSEKRELERLAAQEDPESAENYNSIRRAAEVHRQVRRYVQQTVKPGMSMTEIAEMVEDGTRALVEVDGLQRGIGFPTGVSLNHCAAHYTPNAGDTIVLSADDVLKVDFGVQIGGRIVDSAFTMTFNNKYDKLLEAVRAATNTGIREAGIDARLSDIGASIQETMESYEVEVDGKVHKVKSIRNLTGHNILPYHIHGGKSVPIVANSDESAIMEEGDHFAVETFGSTGRGYVMDDGECSHYAKNPDVNKPIRLARAKTLLNTINKHFDTLPFCKRYLDRLGESRYYAALDNLVNLGIVQAYPPLSDIQGCMTAQYEHTIILRPTCKEVVSRGDDY.

Positions 1 to 11 are enriched in pro residues; the sequence is MTIPVPKPAHP. The interval 1–127 is disordered; the sequence is MTIPVPKPAH…SYRTTSSEKR (127 aa). Residues 31–45 are compositionally biased toward acidic residues; sequence EADEEEDDDDEEGKE. Residues 66-79 show a composition bias toward basic residues; it reads KKKKKKKKKPKKKK. Position 209 (His-209) interacts with substrate. Residues Asp-229, Asp-240, and His-309 each coordinate a divalent metal cation. His-317 serves as a coordination point for substrate. The a divalent metal cation site is built by Glu-343 and Glu-437.

The protein belongs to the peptidase M24A family. Methionine aminopeptidase eukaryotic type 2 subfamily. Co(2+) serves as cofactor. The cofactor is Zn(2+). Mn(2+) is required as a cofactor. Requires Fe(2+) as cofactor.

The protein localises to the cytoplasm. It carries out the reaction Release of N-terminal amino acids, preferentially methionine, from peptides and arylamides.. In terms of biological role, cotranslationally removes the N-terminal methionine from nascent proteins. The N-terminal methionine is often cleaved when the second residue in the primary sequence is small and uncharged (Met-Ala-, Cys, Gly, Pro, Ser, Thr, or Val). This chain is Methionine aminopeptidase 2, found in Puccinia graminis f. sp. tritici (strain CRL 75-36-700-3 / race SCCL) (Black stem rust fungus).